The sequence spans 537 residues: Phosphoenolpyruvate carboxykinase (ATP) (537 aa).

Residues R61, Y195, and K201 each contribute to the substrate site. ATP-binding positions include K201, H220, and 236–244; that span reads GLSGTGKTT. Mn(2+) is bound by residues K201 and H220. Residue D257 coordinates Mn(2+). Residues E285, R323, and T448 each contribute to the ATP site. Residue R323 participates in substrate binding.

It belongs to the phosphoenolpyruvate carboxykinase (ATP) family. Requires Mn(2+) as cofactor.

The protein resides in the cytoplasm. It catalyses the reaction oxaloacetate + ATP = phosphoenolpyruvate + ADP + CO2. Its pathway is carbohydrate biosynthesis; gluconeogenesis. Functionally, involved in the gluconeogenesis. Catalyzes the conversion of oxaloacetate (OAA) to phosphoenolpyruvate (PEP) through direct phosphoryl transfer between the nucleoside triphosphate and OAA. This chain is Phosphoenolpyruvate carboxykinase (ATP), found in Azorhizobium caulinodans (strain ATCC 43989 / DSM 5975 / JCM 20966 / LMG 6465 / NBRC 14845 / NCIMB 13405 / ORS 571).